Reading from the N-terminus, the 483-residue chain is Krueppel-like factor 4 (483 aa).

A disordered region spans residues 22–42 (TFASGPAGREKTLRPAGAPTN). Residue lysine 32 forms a Glycyl lysine isopeptide (Lys-Gly) (interchain with G-Cter in ubiquitin) linkage. The 9aaTAD signature appears at 99 to 107 (DLLDLDFIL). Phosphoserine is present on serine 251. The tract at residues 294-395 (AGPQLSNGHR…KRGRRSWPRK (102 aa)) is disordered. The span at 338-356 (LPLPPGFHPHPGPNYPPFL) shows a compositional bias: pro residues. Glutamate 381 is subject to 5-glutamyl polyglutamate. Residues 386 to 395 (KRGRRSWPRK) are compositionally biased toward basic residues. Positions 386-483 (KRGRRSWPRK…HLALHMKRHF (98 aa)) are interaction with ZNF296. 3 C2H2-type zinc fingers span residues 400–424 (HTCD…LRTH), 430–454 (YHCD…YRKH), and 460–482 (FQCQ…MKRH). Positions 443–474 (RSDELTRHYRKHTGHRPFQCQKCDRAFSRSDH) are interaction with target DNA.

This sequence belongs to the krueppel C2H2-type zinc-finger protein family. In terms of assembly, interacts with MUC1 (via the C-terminal domain). Interacts with POU5F1/OCT4 and SOX2. Interacts with MEIS2 isoform MeisD and PBX1 isoform PBX1a. Interacts with ZNF296. Interacts with GLIS1. Interacts with BTRC; this interaction leads to KLF4 ubiquitination and subsequent degradation. Interacts with IPO7; the interaction facilitates nuclear translocation of KLF4 in dental papilla cells. In terms of processing, ubiquitinated. 'Lys-48'-linked ubiquitinated and targeted for proteasomal degradation by the SCF(BTRC) E3 ubiquitin-protein ligase complex, thereby negatively regulating cell pluripotency maintenance and embryogenesis. Polyglutamylated by TTLL1 and TTLL4 at Glu-381, which inhibits KLF4 binding with E3 ligase component BTRC, thereby impeding ubiquitination. Deglutamylated by CCP1 and CCP6; deglutamylation promotes KLF4 ubiquitination. KLF4 glutamylation state plays a critical role in the regulation of its function in cell reprogramming, pluripotency maintenance and embryogenesis. Highest expression in the colon. Lower levels in testis, lung and small intestine.

Its subcellular location is the nucleus. It is found in the cytoplasm. Functionally, transcription factor; can act both as activator and as repressor. Binds the 5'-CACCC-3' core sequence. Binds to the promoter region of its own gene and can activate its own transcription. Regulates the expression of key transcription factors during embryonic development. Plays an important role in maintaining embryonic stem cells, and in preventing their differentiation. Required for establishing the barrier function of the skin and for postnatal maturation and maintenance of the ocular surface. Involved in the differentiation of epithelial cells and may also function in skeletal and kidney development. Contributes to the down-regulation of p53/TP53 transcription. This chain is Krueppel-like factor 4 (Klf4), found in Mus musculus (Mouse).